Reading from the N-terminus, the 535-residue chain is Calcium-dependent protein kinase 7 (535 aa).

The tract at residues 1 to 29 (MGNCCGNPSSATNQSKQGKPKNKNNPFYS) is disordered. G2 carries the N-myristoyl glycine lipid modification. Positions 59–317 (YDLGREVGRG…AAQVLEHTWI (259 aa)) constitute a Protein kinase domain. ATP is bound by residues 65 to 73 (VGRGEFGIT) and K88. Catalysis depends on D183, which acts as the Proton acceptor. Phosphoserine is present on S223. An autoinhibitory domain region spans residues 323–353 (APNVSLGETVKARLKQFSVMNKLKKRALRVI). 4 EF-hand domains span residues 360-395 (EEAAGIKEAFEMMDVNKRGKINLEELKYGLQKAGQQ), 396-431 (IADTDLQILMEATDVDGDGTLNYSEFVAVSVHLKKM), 432-467 (ANDEHLHKAFNFFDQNQSGYIEIDELREALNDELDN), and 468-504 (TSSEEVIAAIMQDVDTDKDGRISYEEFVAMMKAGTDW). Ca(2+) contacts are provided by D373, N375, K379, E384, D409, D411, D413, T415, E420, D445, N447, S449, Y451, E456, D482, D484, D486, and R488. S490 bears the Phosphoserine mark. E493 lines the Ca(2+) pocket.

This sequence belongs to the protein kinase superfamily. Ser/Thr protein kinase family. CDPK subfamily.

Its subcellular location is the cell membrane. It catalyses the reaction L-seryl-[protein] + ATP = O-phospho-L-seryl-[protein] + ADP + H(+). The catalysed reaction is L-threonyl-[protein] + ATP = O-phospho-L-threonyl-[protein] + ADP + H(+). Activated by calcium. Autophosphorylation may play an important role in the regulation of the kinase activity. Its function is as follows. May play a role in signal transduction pathways that involve calcium as a second messenger. The protein is Calcium-dependent protein kinase 7 (CPK7) of Arabidopsis thaliana (Mouse-ear cress).